The sequence spans 221 residues: Small histidine-alanine-rich protein (221 aa).

An N-terminal signal peptide occupies residues 1 to 21; the sequence is MVSFSKNKILSAAVFASVLLL. Basic and acidic residues predominate over residues 52–67; sequence AHAGDAHHAHHVADAH. Disordered stretches follow at residues 52-141 and 180-221; these read AHAG…AANA and AHHD…HLHH. 2 tandem repeats follow at residues 57-59 and 60-62. The interval 57 to 68 is 4 X 3 AA approximate tandem repeats of A-H-H; that stretch reads AHHAHHVADAHH. A 1-3; approximate repeat occupies 63-65; sequence VAD. 13 repeat units span residues 66-68, 69-74, 75-80, 81-86, 87-92, 93-98, 99-104, 105-110, 111-116, 117-122, 123-128, 129-134, and 135-140. A 13 X 6 AA approximate tandem repeats of A-H-H-A-A-N region spans residues 69–146; that stretch reads AHHAANAHHA…HAANAHHAAD (78 aa). Residues 75-141 are compositionally biased toward low complexity; sequence AHHAANAHHA…AANAHHAANA (67 aa). A 2-13; approximate repeat occupies 141–146; that stretch reads AHHAAD. Tandem repeats lie at residues 176-180, 181-185, 186-190, 191-195, 196-200, 201-205, and 206-210. Residues 176-210 are 7 X 5 AA tandem repeats of H-H-D-[DG]-A; sequence HHDDAHHDGAHHDDAHHDGAHHDGAHHDGAHHDGA. A compositionally biased stretch (basic and acidic residues) spans 180-211; sequence AHHDGAHHDDAHHDGAHHDGAHHDGAHHDGAH.

The polypeptide is Small histidine-alanine-rich protein (Plasmodium falciparum (isolate FC27 / Papua New Guinea)).